Here is a 275-residue protein sequence, read N- to C-terminus: Diaminopimelate epimerase (275 aa).

The substrate site is built by Asn-20 and Asn-63. The active-site Proton donor is Cys-72. Residues 73–74 (GN), Asn-179, and 197–198 (ER) each bind substrate. Catalysis depends on Cys-207, which acts as the Proton acceptor. Position 208–209 (208–209 (GT)) interacts with substrate.

Belongs to the diaminopimelate epimerase family. Homodimer.

The protein localises to the cytoplasm. It catalyses the reaction (2S,6S)-2,6-diaminopimelate = meso-2,6-diaminopimelate. The protein operates within amino-acid biosynthesis; L-lysine biosynthesis via DAP pathway; DL-2,6-diaminopimelate from LL-2,6-diaminopimelate: step 1/1. Functionally, catalyzes the stereoinversion of LL-2,6-diaminopimelate (L,L-DAP) to meso-diaminopimelate (meso-DAP), a precursor of L-lysine and an essential component of the bacterial peptidoglycan. The protein is Diaminopimelate epimerase of Chlamydia trachomatis serovar L2 (strain ATCC VR-902B / DSM 19102 / 434/Bu).